A 131-amino-acid chain; its full sequence is Sec-independent protein translocase protein TatB (131 aa).

The helical transmembrane segment at 1 to 21 (MFDISFAELVVVGIVALIVIG) threads the bilayer. Composition is skewed to polar residues over residues 71 to 93 (NSFE…TQSA) and 111 to 131 (PVNT…QPNS). The disordered stretch occupies residues 71 to 131 (NSFENSVRSE…APAEPRQPNS (61 aa)).

The protein belongs to the TatB family. The Tat system comprises two distinct complexes: a TatABC complex, containing multiple copies of TatA, TatB and TatC subunits, and a separate TatA complex, containing only TatA subunits. Substrates initially bind to the TatABC complex, which probably triggers association of the separate TatA complex to form the active translocon.

The protein localises to the cell inner membrane. Functionally, part of the twin-arginine translocation (Tat) system that transports large folded proteins containing a characteristic twin-arginine motif in their signal peptide across membranes. Together with TatC, TatB is part of a receptor directly interacting with Tat signal peptides. TatB may form an oligomeric binding site that transiently accommodates folded Tat precursor proteins before their translocation. This is Sec-independent protein translocase protein TatB from Nitrosomonas europaea (strain ATCC 19718 / CIP 103999 / KCTC 2705 / NBRC 14298).